The following is a 282-amino-acid chain: MSGADRSPNAGAAPDSAPGQAAVASAYQRFEPRAYLRNNYAPPRGDLCNPNGVGPWKLRCLAQTFATGEVSGRTLIDIGSGPTVYQLLSACSHFEDITMTDFLEVNRQELGRWLQEEPGAFNWSMYSQHACLIEGKGECWQDKERQLRARVKRVLPIDVHQPQPLGAGSPAPLPADALVSAFCLEAVSPDLASFQRALDHITTLLRPGGHLLLIGALEESWYLAGEARLTVVPVSEEEVREALVRSGYKVRDLRTYIMPAHLQTGVDDVKGVFFAWAQKVGL.

At S7 the chain carries Phosphoserine. Residues Y35, Y40, 79–80, Y85, D101, N106, 158–159, and A181 contribute to the S-adenosyl-L-methionine site; these read GS and DV. 2 residues coordinate octopamine: E219 and D267.

The enzyme catalyses phenylethanolamine + S-adenosyl-L-methionine = N-methylphenylethanolamine + S-adenosyl-L-homocysteine + H(+). The catalysed reaction is (R)-noradrenaline + S-adenosyl-L-methionine = (R)-adrenaline + S-adenosyl-L-homocysteine + H(+). It carries out the reaction (R)-normetanephrine + S-adenosyl-L-methionine = (R)-metanephrine + S-adenosyl-L-homocysteine + H(+). It catalyses the reaction (R)-octopamine + S-adenosyl-L-methionine = (R)-synephrine + S-adenosyl-L-homocysteine + H(+). Its pathway is catecholamine biosynthesis; (R)-adrenaline biosynthesis; (R)-adrenaline from (R)-noradrenaline: step 1/1. Inhibited by methyl methanethiosulfonate, phenylglyoxal, tetranitromethane and diethyl pyrocarbonate. Inhibited by 4-oxo-1,4-dihydro-quinoline-3,7-dicarboxylic acid, 4-(benzo[d][1,3]dioxol-5-ylamino)-4-oxobutanoic acid and 1,4-diaminonaphthalene-2,6-disulfonic acid. Functionally, catalyzes the transmethylation of nonepinephrine (noradrenaline) to form epinephrine (adrenaline), using S-adenosyl-L-methionine as the methyl donor. Other substrates include phenylethanolamine and octopamine. Also methylates normetanephrine. This chain is Phenylethanolamine N-methyltransferase (PNMT), found in Homo sapiens (Human).